Consider the following 335-residue polypeptide: tRNA N6-adenosine threonylcarbamoyltransferase (335 aa).

The Fe cation site is built by H110 and H114. Residues 132 to 136 (LVSGG), D165, G178, and N271 each bind substrate. D299 contributes to the Fe cation binding site.

Belongs to the KAE1 / TsaD family. The cofactor is Fe(2+).

It is found in the cytoplasm. It carries out the reaction L-threonylcarbamoyladenylate + adenosine(37) in tRNA = N(6)-L-threonylcarbamoyladenosine(37) in tRNA + AMP + H(+). Functionally, required for the formation of a threonylcarbamoyl group on adenosine at position 37 (t(6)A37) in tRNAs that read codons beginning with adenine. Is involved in the transfer of the threonylcarbamoyl moiety of threonylcarbamoyl-AMP (TC-AMP) to the N6 group of A37, together with TsaE and TsaB. TsaD likely plays a direct catalytic role in this reaction. The sequence is that of tRNA N6-adenosine threonylcarbamoyltransferase from Campylobacter jejuni subsp. jejuni serotype O:23/36 (strain 81-176).